Here is a 163-residue protein sequence, read N- to C-terminus: Large ribosomal subunit protein uL15 (163 aa).

Residues M1–G43 are disordered. The span at R21–G37 shows a compositional bias: gly residues.

This sequence belongs to the universal ribosomal protein uL15 family. In terms of assembly, part of the 50S ribosomal subunit.

In terms of biological role, binds to the 23S rRNA. This is Large ribosomal subunit protein uL15 from Afipia carboxidovorans (strain ATCC 49405 / DSM 1227 / KCTC 32145 / OM5) (Oligotropha carboxidovorans).